The chain runs to 377 residues: GDSL esterase/lipase 4 (377 aa).

A signal peptide spans 1–21; the sequence is MASPRFNSIIIILFICTISLS. The active-site Nucleophile is the S44. 5 N-linked (GlcNAc...) asparagine glycosylation sites follow: N135, N188, N194, N207, and N241. Catalysis depends on residues D342 and H345. Residue N364 is glycosylated (N-linked (GlcNAc...) asparagine).

This sequence belongs to the 'GDSL' lipolytic enzyme family.

It localises to the secreted. This Arabidopsis thaliana (Mouse-ear cress) protein is GDSL esterase/lipase 4 (GLIP4).